A 201-amino-acid chain; its full sequence is Protein Thf1 (201 aa).

Positions 174 to 201 (IYKSSISKMEQAKELIQEQRIKDKKKTL) form a coiled coil.

The protein belongs to the THF1 family.

Its function is as follows. May be involved in photosynthetic membrane biogenesis. The sequence is that of Protein Thf1 from Prochlorococcus marinus (strain MIT 9312).